Here is a 243-residue protein sequence, read N- to C-terminus: MVKSMIAVISDIHSNLEALNAVLNDIKNRGIKKIFCLGDIVGYGANPNECVELIRDLNCLSVVGNHDYGVLGKESLDYFNKYGAIAILWTKKVIKNENLKFLDSLPLIIEENIKGKKVIFSHANPKHPEIWEYLFPDYVDDVFNYGDLIFVGHSHIPFVNSEEGNLLLHEGKIYLDEDKKYLINPGSVGQPRDGINKASYCIFDEKDFKIEIVRVEYDIKKAYEKIVKNRLPEWLGERLFLGR.

This is an uncharacterized protein from Methanocaldococcus jannaschii (strain ATCC 43067 / DSM 2661 / JAL-1 / JCM 10045 / NBRC 100440) (Methanococcus jannaschii).